A 116-amino-acid polypeptide reads, in one-letter code: uncharacterized protein (116 aa).

2 consecutive transmembrane segments (helical) span residues 24-44 and 70-90; these read VPFA…VLTA and VILT…IILS.

Its subcellular location is the membrane. This is an uncharacterized protein from Saccharomyces cerevisiae (strain ATCC 204508 / S288c) (Baker's yeast).